The primary structure comprises 330 residues: D-alanine--D-alanine ligase (330 aa).

Residues Asn121 to Glu321 form the ATP-grasp domain. ATP is bound at residue Val149–Thr204. The Mg(2+) site is built by Asp275, Glu288, and Asn290.

This sequence belongs to the D-alanine--D-alanine ligase family. It depends on Mg(2+) as a cofactor. Mn(2+) serves as cofactor.

The protein resides in the cytoplasm. It carries out the reaction 2 D-alanine + ATP = D-alanyl-D-alanine + ADP + phosphate + H(+). Its pathway is cell wall biogenesis; peptidoglycan biosynthesis. Its function is as follows. Cell wall formation. The sequence is that of D-alanine--D-alanine ligase from Parabacteroides distasonis (strain ATCC 8503 / DSM 20701 / CIP 104284 / JCM 5825 / NCTC 11152).